The chain runs to 207 residues: dTTP/UTP pyrophosphatase (207 aa).

D68 acts as the Proton acceptor in catalysis.

The protein belongs to the Maf family. YhdE subfamily. Requires a divalent metal cation as cofactor.

It localises to the cytoplasm. It carries out the reaction dTTP + H2O = dTMP + diphosphate + H(+). The enzyme catalyses UTP + H2O = UMP + diphosphate + H(+). Nucleoside triphosphate pyrophosphatase that hydrolyzes dTTP and UTP. May have a dual role in cell division arrest and in preventing the incorporation of modified nucleotides into cellular nucleic acids. The chain is dTTP/UTP pyrophosphatase from Staphylothermus marinus (strain ATCC 43588 / DSM 3639 / JCM 9404 / F1).